A 113-amino-acid polypeptide reads, in one-letter code: uncharacterized protein (113 aa).

This is an uncharacterized protein from Listeria innocua serovar 6a (strain ATCC BAA-680 / CLIP 11262).